The following is a 464-amino-acid chain: UDP-N-acetylmuramoylalanine--D-glutamate ligase (464 aa).

112–118 provides a ligand contact to ATP; it reads GTDGKTT.

This sequence belongs to the MurCDEF family.

The protein resides in the cytoplasm. The catalysed reaction is UDP-N-acetyl-alpha-D-muramoyl-L-alanine + D-glutamate + ATP = UDP-N-acetyl-alpha-D-muramoyl-L-alanyl-D-glutamate + ADP + phosphate + H(+). It participates in cell wall biogenesis; peptidoglycan biosynthesis. Its function is as follows. Cell wall formation. Catalyzes the addition of glutamate to the nucleotide precursor UDP-N-acetylmuramoyl-L-alanine (UMA). The chain is UDP-N-acetylmuramoylalanine--D-glutamate ligase from Chlorobium chlorochromatii (strain CaD3).